The following is a 235-amino-acid chain: Small ribosomal subunit protein uS2 (235 aa).

The protein belongs to the universal ribosomal protein uS2 family.

The protein is Small ribosomal subunit protein uS2 of Geobacillus kaustophilus (strain HTA426).